The chain runs to 306 residues: tRNA dimethylallyltransferase (306 aa).

An ATP-binding site is contributed by 2-9 (GPTASGKT). 4–9 (TASGKT) provides a ligand contact to substrate. 2 interaction with substrate tRNA regions span residues 27–30 (DSVQ) and 152–156 (QRIVR).

The protein belongs to the IPP transferase family. As to quaternary structure, monomer. Mg(2+) serves as cofactor.

It carries out the reaction adenosine(37) in tRNA + dimethylallyl diphosphate = N(6)-dimethylallyladenosine(37) in tRNA + diphosphate. Its function is as follows. Catalyzes the transfer of a dimethylallyl group onto the adenine at position 37 in tRNAs that read codons beginning with uridine, leading to the formation of N6-(dimethylallyl)adenosine (i(6)A). The polypeptide is tRNA dimethylallyltransferase (Magnetococcus marinus (strain ATCC BAA-1437 / JCM 17883 / MC-1)).